The chain runs to 82 residues: RNA-binding protein KhpA (82 aa).

Residues 35–82 (STILELRVSQSDVGKIIGRRGRIARAIRTLLGACAAKTNRRVQLEILD) form the KH domain.

This sequence belongs to the KhpA RNA-binding protein family. As to quaternary structure, forms a complex with KhpB.

It is found in the cytoplasm. Functionally, a probable RNA chaperone. Forms a complex with KhpB which binds to cellular RNA and controls its expression. Plays a role in peptidoglycan (PG) homeostasis and cell length regulation. The protein is RNA-binding protein KhpA of Borreliella burgdorferi (strain ATCC 35210 / DSM 4680 / CIP 102532 / B31) (Borrelia burgdorferi).